The primary structure comprises 134 residues: Putative pre-16S rRNA nuclease (134 aa).

It belongs to the YqgF nuclease family.

It is found in the cytoplasm. In terms of biological role, could be a nuclease involved in processing of the 5'-end of pre-16S rRNA. In Hydrogenovibrio crunogenus (strain DSM 25203 / XCL-2) (Thiomicrospira crunogena), this protein is Putative pre-16S rRNA nuclease.